A 223-amino-acid chain; its full sequence is Cytidylate kinase (223 aa).

13 to 21 (GPSASGKGT) contacts ATP.

This sequence belongs to the cytidylate kinase family. Type 1 subfamily.

Its subcellular location is the cytoplasm. The catalysed reaction is CMP + ATP = CDP + ADP. It carries out the reaction dCMP + ATP = dCDP + ADP. The polypeptide is Cytidylate kinase (Nitrosomonas europaea (strain ATCC 19718 / CIP 103999 / KCTC 2705 / NBRC 14298)).